A 161-amino-acid polypeptide reads, in one-letter code: Allophycocyanin beta chain (161 aa).

Residue Asn-71 is modified to N4-methylasparagine. Position 81 (Cys-81) interacts with (2R,3E)-phycocyanobilin.

Belongs to the phycobiliprotein family. As to quaternary structure, heterodimer of an alpha and a beta chain. In terms of processing, contains one covalently linked phycocyanobilin chromophore.

The protein localises to the cellular thylakoid membrane. In terms of biological role, light-harvesting photosynthetic bile pigment-protein from the phycobiliprotein complex. Allophycocyanin has a maximum absorption at approximately 650 nanometers. The polypeptide is Allophycocyanin beta chain (apcB) (Synechocystis sp. (strain ATCC 27184 / PCC 6803 / Kazusa)).